Here is a 274-residue protein sequence, read N- to C-terminus: uncharacterized protein (274 aa).

An N-terminal signal peptide occupies residues 1-17; the sequence is MKKLLAGFLTLSLALAA. Cysteine 18 carries the N-palmitoyl cysteine lipid modification. Cysteine 18 carries S-diacylglycerol cysteine lipidation. Positions 18–169 are disordered; sequence CSNGSDDDSS…DANNGASSAN (152 aa). The span at 25–76 shows a compositional bias: basic and acidic residues; sequence DSSKKDDSSKDNQSSDDKSKDSKNDDKKNNDSDKDKDNNSDSDKNSDSKSDD. Residues 91–169 are compositionally biased toward low complexity; it reads SDNASGSDSS…DANNGASSAN (79 aa).

It localises to the cell membrane. This is an uncharacterized protein from Staphylococcus saprophyticus subsp. saprophyticus (strain ATCC 15305 / DSM 20229 / NCIMB 8711 / NCTC 7292 / S-41).